The sequence spans 367 residues: Peptide chain release factor 2 (367 aa).

Position 254 is an N5-methylglutamine (Gln254).

It belongs to the prokaryotic/mitochondrial release factor family. Methylated by PrmC. Methylation increases the termination efficiency of RF2.

Its subcellular location is the cytoplasm. Its function is as follows. Peptide chain release factor 2 directs the termination of translation in response to the peptide chain termination codons UGA and UAA. This is Peptide chain release factor 2 from Leptospira borgpetersenii serovar Hardjo-bovis (strain JB197).